The sequence spans 312 residues: HPr kinase/phosphorylase (312 aa).

Catalysis depends on residues histidine 141 and lysine 162. 156 to 163 (GDSGIGKS) serves as a coordination point for ATP. Serine 163 serves as a coordination point for Mg(2+). Aspartate 180 functions as the Proton acceptor; for phosphorylation activity. Proton donor; for dephosphorylation activity in the catalytic mechanism. The interval 204 to 213 (LEIRGVGIID) is important for the catalytic mechanism of both phosphorylation and dephosphorylation. A Mg(2+)-binding site is contributed by glutamate 205. Residue arginine 246 is part of the active site. Residues 267 to 272 (PVRVGR) form an important for the catalytic mechanism of dephosphorylation region.

Belongs to the HPrK/P family. Homohexamer. It depends on Mg(2+) as a cofactor.

It carries out the reaction [HPr protein]-L-serine + ATP = [HPr protein]-O-phospho-L-serine + ADP + H(+). The enzyme catalyses [HPr protein]-O-phospho-L-serine + phosphate + H(+) = [HPr protein]-L-serine + diphosphate. Functionally, catalyzes the ATP- as well as the pyrophosphate-dependent phosphorylation of a specific serine residue in HPr, a phosphocarrier protein of the phosphoenolpyruvate-dependent sugar phosphotransferase system (PTS). HprK/P also catalyzes the pyrophosphate-producing, inorganic phosphate-dependent dephosphorylation (phosphorolysis) of seryl-phosphorylated HPr (P-Ser-HPr). The two antagonistic activities of HprK/P are regulated by several intracellular metabolites, which change their concentration in response to the absence or presence of rapidly metabolisable carbon sources (glucose, fructose, etc.) in the growth medium. Therefore, by controlling the phosphorylation state of HPr, HPrK/P is a sensor enzyme that plays a major role in the regulation of carbon metabolism and sugar transport: it mediates carbon catabolite repression (CCR), and regulates PTS-catalyzed carbohydrate uptake and inducer exclusion. This chain is HPr kinase/phosphorylase, found in Pediococcus pentosaceus (strain ATCC 25745 / CCUG 21536 / LMG 10740 / 183-1w).